Consider the following 371-residue polypeptide: Cytochrome b (371 aa).

Transmembrane regions (helical) follow at residues 25–45 (FGSM…FLAI), 69–90 (WIMQ…YIHI), 105–125 (WLSG…GYVL), and 170–190 (FCAL…IHII). Positions 75 and 89 each coordinate heme b. Residues His-174 and His-188 each coordinate heme b. Residue His-193 participates in a ubiquinone binding. 4 helical membrane passes run 218 to 238 (YKDF…LSVS), 280 to 300 (LGGT…PFTH), 312 to 332 (LSQT…WTAT), and 339 to 358 (FITI…IMNP).

This sequence belongs to the cytochrome b family. As to quaternary structure, the cytochrome bc1 complex contains 3 respiratory subunits (MT-CYB, CYC1 and UQCRFS1), 2 core proteins (UQCRC1 and UQCRC2) and probably 6 low-molecular weight proteins. Heme b is required as a cofactor.

The protein resides in the mitochondrion inner membrane. Component of the ubiquinol-cytochrome c reductase complex (complex III or cytochrome b-c1 complex) that is part of the mitochondrial respiratory chain. The b-c1 complex mediates electron transfer from ubiquinol to cytochrome c. Contributes to the generation of a proton gradient across the mitochondrial membrane that is then used for ATP synthesis. The chain is Cytochrome b (MT-CYB) from Micrurus tener microgalbineus (Spotted coral snake).